We begin with the raw amino-acid sequence, 201 residues long: Holliday junction branch migration complex subunit RuvA (201 aa).

The segment at 1 to 64 is domain I; that stretch reads MIGFIRGLLV…EDAHSLFGFG (64 aa). Residues 65–143 are domain II; it reads TEAERGLFRS…IGVPSLAPAS (79 aa). Residues 144-153 are flexible linker; sequence FAGGAAPLPA. The domain III stretch occupies residues 153 to 201; it reads AADPADEAVSALIALGFKPQEANTLVARQAAEGRSAEDLIRAALQSAVR.

Belongs to the RuvA family. As to quaternary structure, homotetramer. Forms an RuvA(8)-RuvB(12)-Holliday junction (HJ) complex. HJ DNA is sandwiched between 2 RuvA tetramers; dsDNA enters through RuvA and exits via RuvB. An RuvB hexamer assembles on each DNA strand where it exits the tetramer. Each RuvB hexamer is contacted by two RuvA subunits (via domain III) on 2 adjacent RuvB subunits; this complex drives branch migration. In the full resolvosome a probable DNA-RuvA(4)-RuvB(12)-RuvC(2) complex forms which resolves the HJ.

Its subcellular location is the cytoplasm. In terms of biological role, the RuvA-RuvB-RuvC complex processes Holliday junction (HJ) DNA during genetic recombination and DNA repair, while the RuvA-RuvB complex plays an important role in the rescue of blocked DNA replication forks via replication fork reversal (RFR). RuvA specifically binds to HJ cruciform DNA, conferring on it an open structure. The RuvB hexamer acts as an ATP-dependent pump, pulling dsDNA into and through the RuvAB complex. HJ branch migration allows RuvC to scan DNA until it finds its consensus sequence, where it cleaves and resolves the cruciform DNA. The polypeptide is Holliday junction branch migration complex subunit RuvA (Methylococcus capsulatus (strain ATCC 33009 / NCIMB 11132 / Bath)).